A 354-amino-acid chain; its full sequence is Putative ankyrin repeat protein L284 (354 aa).

ANK repeat units lie at residues 201–230, 253–284, and 286–314; these read ILDD…LSND, SRYP…NPIV, and LHKA…DIDI.

In Acanthamoeba polyphaga (Amoeba), this protein is Putative ankyrin repeat protein L284.